A 300-amino-acid chain; its full sequence is Ornithine carbamoyltransferase (300 aa).

Residues 49-52 (STRT), Gln-76, Arg-100, and 127-130 (HPCQ) contribute to the carbamoyl phosphate site. L-ornithine-binding positions include Asn-158, Asp-218, and 222-223 (SM). Residues 258-259 (CL) and Arg-286 each bind carbamoyl phosphate.

It belongs to the aspartate/ornithine carbamoyltransferase superfamily. OTCase family.

Its subcellular location is the cytoplasm. The enzyme catalyses carbamoyl phosphate + L-ornithine = L-citrulline + phosphate + H(+). It participates in amino-acid biosynthesis; L-arginine biosynthesis; L-arginine from L-ornithine and carbamoyl phosphate: step 1/3. Its function is as follows. Reversibly catalyzes the transfer of the carbamoyl group from carbamoyl phosphate (CP) to the N(epsilon) atom of ornithine (ORN) to produce L-citrulline. This chain is Ornithine carbamoyltransferase, found in Oleidesulfovibrio alaskensis (strain ATCC BAA-1058 / DSM 17464 / G20) (Desulfovibrio alaskensis).